The sequence spans 374 residues: tRNA-specific 2-thiouridylase MnmA (374 aa).

Residues 17–24 (GMSGGVDS) and M43 contribute to the ATP site. The interval 103-105 (NPD) is interaction with target base in tRNA. The active-site Nucleophile is C108. C108 and C204 are oxidised to a cystine. ATP is bound at residue G132. The segment at 154–156 (KDQ) is interaction with tRNA. C204 acts as the Cysteine persulfide intermediate in catalysis. The tract at residues 316-317 (RY) is interaction with tRNA.

The protein belongs to the MnmA/TRMU family.

It localises to the cytoplasm. It catalyses the reaction S-sulfanyl-L-cysteinyl-[protein] + uridine(34) in tRNA + AH2 + ATP = 2-thiouridine(34) in tRNA + L-cysteinyl-[protein] + A + AMP + diphosphate + H(+). Catalyzes the 2-thiolation of uridine at the wobble position (U34) of tRNA, leading to the formation of s(2)U34. This Pseudomonas entomophila (strain L48) protein is tRNA-specific 2-thiouridylase MnmA.